Consider the following 249-residue polypeptide: Metallo-beta-lactamase type 2 (249 aa).

Positions 1 to 22 (MLKKIKISLILALGLTSLQAFG) are cleaved as a signal peptide. Positions 98, 100, 102, 161, and 180 each coordinate Zn(2+). K183 is a substrate binding site. Residue H222 coordinates Zn(2+).

It belongs to the metallo-beta-lactamase superfamily. Class-B beta-lactamase family. In terms of assembly, monomer. Zn(2+) is required as a cofactor.

It is found in the periplasm. The enzyme catalyses a beta-lactam + H2O = a substituted beta-amino acid. Confers resistance to the different beta-lactams antibiotics (penicillin, cephalosporin and carbapenem) via the hydrolysis of the beta-lactam ring. The protein is Metallo-beta-lactamase type 2 (blaB3) of Elizabethkingia meningoseptica (Chryseobacterium meningosepticum).